Reading from the N-terminus, the 675-residue chain is Probable potassium transport system protein Kup (675 aa).

Residues 1-12 are compositionally biased toward basic and acidic residues; the sequence is MEPAMPEHDGDH. Positions 1–25 are disordered; sequence MEPAMPEHDGDHASNPPHGVGIPND. Helical transmembrane passes span 62–82, 104–124, 153–173, 195–215, 222–242, 255–275, 300–320, 332–352, 390–410, 419–439, 450–470, and 472–492; these read ALLAVLGVVYGDIGTSPLYAL, LASLTFWALMLIVTIKYVILI, WLFGLVGIAGTCLFFGDSIIT, IIIPLAMVVLVALFSVQVLGT, FGPIMVCWFSVLAILGIKGIF, FALEFIVLHGYLSFIALGSVV, WLFFVLPSLTLNYFGQAALLI, LLVPHWAQIPMLVLATFATVI, IYLPSLNWILAFGALVLVLAF, AYGIAVTGTFLCTCVLAMVVF, VAIVFGFFFIVDSIFFSANVL, and IPDGGWVPLAIGIISTIIMTT.

Belongs to the HAK/KUP transporter (TC 2.A.72) family.

It is found in the cell inner membrane. It catalyses the reaction K(+)(in) + H(+)(in) = K(+)(out) + H(+)(out). Its function is as follows. Transport of potassium into the cell. Likely operates as a K(+):H(+) symporter. This is Probable potassium transport system protein Kup from Gluconobacter oxydans (strain 621H) (Gluconobacter suboxydans).